The following is a 388-amino-acid chain: Beta-hexosaminidase LpqI (388 aa).

The N-terminal stretch at M1–A19 is a signal peptide. The N-palmitoyl cysteine moiety is linked to residue C20. C20 carries the S-diacylglycerol cysteine lipid modification. Residues D123, R131, R193, and K223–H224 each bind substrate. Residue H236 is the Proton donor/acceptor of the active site. Residue D311 is the Nucleophile of the active site.

Belongs to the glycosyl hydrolase 3 family.

The protein localises to the cell inner membrane. The catalysed reaction is Hydrolysis of terminal non-reducing N-acetyl-D-hexosamine residues in N-acetyl-beta-D-hexosaminides.. The protein operates within cell wall biogenesis; peptidoglycan recycling. Its function is as follows. Plays a role in peptidoglycan recycling by cleaving the terminal beta-1,4-linked N-acetylglucosamine (GlcNAc) from peptidoglycan fragments. Acts as a regulator for GlcNAc-MurNAc levels by cleaving disaccharides and allowing the breakdown of MurNAc. The protein is Beta-hexosaminidase LpqI of Mycobacterium bovis (strain BCG / Pasteur 1173P2).